The sequence spans 898 residues: MLALNAGSQYPGRGRGRGRGDGGNRVHKHDGINRYHGGFRGGRGGGGGGFRDGDMRECRERESWAVSAAQANARTLARVPVPVETNCFPIDLSEGRFHNYIVSFEFLENATDMAGDMWKISLQNELLRTIRKNRTAEKRTRTSAEVEDLCVCTGQAILAPAKLSVEDGFSIECTRKEKVSRNNTEERHYRVRIRYDGEVSLKLPEHAQWVNKIIAFGLADTYSEHIGSDYVDMKSTVERGGDLVTMDAISLNALRIVKQSGSTTAMMDVLQLDVSTKASTKTKCSDEMRRLRQQNPQGFRRAVNEALVGISVTTVFGEPTFLKVKAIDFNILASSPTMFKTNPEETFVEYFKRKYDAIIDPTLPMLYCIFADRTKMSRRMPYPADSLLLNKLNEAQLSKLPILCSIYPNERMKRIKAALERVLASPLMITVLQQYGVRIQPQFVKVSGRVLPAPTIYVPSGPNMFNRINTAEYTGQAGFALGLKDLQHPSQPCEFKTLLMDEYFMHGNITHWLQKYNVALPSPRKTSFDSAAQRITEGPGTFAMVKLRTKEAGAYNNFKERFARSSIVSQMAVVDLTRNVPQMITQQVAAKIGQLCFVADVDEAGKSFACRPLLIVGAVVGTAMNTMLEKYKSINVRLYTITFVAFLANGKSWKPYCMHHQVKGEEHVLYEDSDAASSHMSSTTLTVRRQNANEVLNNRFPDFLKEVTAHFKLNGKGSKGTMVLYRGAMTDAEVGFTANMDLVMEQVLPNWDTATVVVHPRSHFRMAWDPTTVFPHETASAYAGLSNVPRGFSTTDCRIILADSDPYTPVDSFYLSAANCTLGHAANTYYLVQKRAASISLMDLQKLTYNMCYMYPNKPDALPLPLPIKCAYEYARKYGSLKSVKELPTRMRPTMHYL.

A disordered region spans residues 1-52; the sequence is MLALNAGSQYPGRGRGRGRGDGGNRVHKHDGINRYHGGFRGGRGGGGGGFRD. Positions 18–33 are enriched in basic and acidic residues; sequence GRGDGGNRVHKHDGIN. The span at 38-50 shows a compositional bias: gly residues; sequence GFRGGRGGGGGGF. Residues 283–378 enclose the PAZ domain; sequence KCSDEMRRLR…IFADRTKMSR (96 aa). The Piwi domain maps to 542–883; it reads FAMVKLRTKE…YARKYGSLKS (342 aa).

It belongs to the argonaute family.

It is found in the cytoplasm. Functionally, involved in RNA-mediated gene silencing (RNAi) of mobile elements and repeats including retroposons SLACS (Spliced Leader Associated Conserved Sequence), TATE (Telomere-Associated Transposable Element) and TAS-like sequences (Telomere Associated Sequence), and a family of 74-nucleotide long tandem repeats, CIR74. Predominantly binds to siRNAs derived from SLACS and TATE transposable elements and to a lesser extent to siRNAs from TAS-like and CIR74 elements. This is Protein argonaute 1 from Leishmania braziliensis.